The chain runs to 160 residues: Probable chemoreceptor glutamine deamidase CheD 2 (160 aa).

It belongs to the CheD family.

The enzyme catalyses L-glutaminyl-[protein] + H2O = L-glutamyl-[protein] + NH4(+). In terms of biological role, probably deamidates glutamine residues to glutamate on methyl-accepting chemotaxis receptors (MCPs), playing an important role in chemotaxis. The polypeptide is Probable chemoreceptor glutamine deamidase CheD 2 (Geobacter sulfurreducens (strain ATCC 51573 / DSM 12127 / PCA)).